The sequence spans 430 residues: Enolase (430 aa).

Gln-167 is a binding site for (2R)-2-phosphoglycerate. Catalysis depends on Glu-209, which acts as the Proton donor. 3 residues coordinate Mg(2+): Asp-246, Glu-287, and Asp-314. Positions 339, 368, 369, and 390 each coordinate (2R)-2-phosphoglycerate. The active-site Proton acceptor is Lys-339.

It belongs to the enolase family. Requires Mg(2+) as cofactor.

It localises to the cytoplasm. The protein localises to the secreted. Its subcellular location is the cell surface. The enzyme catalyses (2R)-2-phosphoglycerate = phosphoenolpyruvate + H2O. It participates in carbohydrate degradation; glycolysis; pyruvate from D-glyceraldehyde 3-phosphate: step 4/5. Its function is as follows. Catalyzes the reversible conversion of 2-phosphoglycerate (2-PG) into phosphoenolpyruvate (PEP). It is essential for the degradation of carbohydrates via glycolysis. The protein is Enolase of Prochlorococcus marinus subsp. pastoris (strain CCMP1986 / NIES-2087 / MED4).